The sequence spans 340 residues: Deubiquitinase SseL (340 aa).

Residue His-222 is part of the active site. Residue Cys-284 is the Nucleophile of the active site.

It belongs to the peptidase C79 family.

The protein localises to the secreted. The protein resides in the host cytoplasm. Its function is as follows. Effector proteins function to alter host cell physiology and promote bacterial survival in host tissues. This protease targets the host cell ubiquitin pathway by acting as a deubiquitinase in infected host cells. In Salmonella arizonae (strain ATCC BAA-731 / CDC346-86 / RSK2980), this protein is Deubiquitinase SseL (sseL).